A 441-amino-acid chain; its full sequence is ATP-dependent protease ATPase subunit HslU (441 aa).

ATP is bound by residues isoleucine 18 and 60-65 (GVGKTE). Positions 131–158 (ILDALLPRPRGSEYDHARDESSTRQTFR) are disordered. Over residues 140 to 152 (RGSEYDHARDESS) the composition is skewed to basic and acidic residues. The ATP site is built by aspartate 254, glutamate 320, and arginine 392.

This sequence belongs to the ClpX chaperone family. HslU subfamily. A double ring-shaped homohexamer of HslV is capped on each side by a ring-shaped HslU homohexamer. The assembly of the HslU/HslV complex is dependent on binding of ATP.

The protein localises to the cytoplasm. ATPase subunit of a proteasome-like degradation complex; this subunit has chaperone activity. The binding of ATP and its subsequent hydrolysis by HslU are essential for unfolding of protein substrates subsequently hydrolyzed by HslV. HslU recognizes the N-terminal part of its protein substrates and unfolds these before they are guided to HslV for hydrolysis. This chain is ATP-dependent protease ATPase subunit HslU, found in Chromohalobacter salexigens (strain ATCC BAA-138 / DSM 3043 / CIP 106854 / NCIMB 13768 / 1H11).